Consider the following 341-residue polypeptide: Methionine import ATP-binding protein MetN (341 aa).

An ABC transporter domain is found at 2-241 (INLQDVSKVY…PKEQMTKRFV (240 aa)). An ATP-binding site is contributed by 38 to 45 (GYSGAGKS).

Belongs to the ABC transporter superfamily. Methionine importer (TC 3.A.1.24) family. As to quaternary structure, the complex is composed of two ATP-binding proteins (MetN), two transmembrane proteins (MetP) and a solute-binding protein (MetQ).

It is found in the cell membrane. The enzyme catalyses L-methionine(out) + ATP + H2O = L-methionine(in) + ADP + phosphate + H(+). It catalyses the reaction D-methionine(out) + ATP + H2O = D-methionine(in) + ADP + phosphate + H(+). Part of the ABC transporter complex MetNPQ involved in methionine import. Responsible for energy coupling to the transport system. It has also been shown to be involved in methionine sulfoxide transport. The sequence is that of Methionine import ATP-binding protein MetN from Bacillus subtilis (strain 168).